We begin with the raw amino-acid sequence, 1247 residues long: Catenin delta-2 (1247 aa).

3 disordered regions span residues 1–50, 134–238, and 256–309; these read MFAR…TTSA, SGIL…SAFH, and LPAP…KSYS. Position 7 is a phosphoserine (Ser7). Positions 22–50 are enriched in polar residues; sequence PSASEKNSSLSPGLNTSNGDGSETETTSA. Residues 49–84 are a coiled coil; that stretch reads SAILASVKEQELQFERLTRELEAERQIVASQLERCK. Positions 149 to 160 are enriched in low complexity; sequence SLLSQSALQLNS. Positions 172–207 are enriched in polar residues; sequence YHSNQTLALGDTAPSQLPARSTQARAAGQSFSQGTT. Arg209 carries the omega-N-methylarginine modification. Positions 218-228 are enriched in pro residues; the sequence is PAPPPPPPREP. Residue Arg261 is modified to Omega-N-methylarginine. Phosphoserine occurs at positions 264 and 273. Over residues 265–276 the composition is skewed to polar residues; it reads PLTTTQGGSPTK. Residues Arg279 and Arg293 each carry the omega-N-methylarginine modification. The span at 296-309 shows a compositional bias: polar residues; the sequence is SPKQSPSRLAKSYS. Residues Ser324, Ser357, Ser412, and Ser458 each carry the phosphoserine modification. Residues 391–433 form an ARM 1 repeat; sequence GSRASYSSQHGHLAPELRALQSPEHHIDPIYEDRVYQKPPMRS. Residues 429–480 form a disordered region; it reads PPMRSLSQSQGDPLPPAHTGTFRTSTAPSSPGVDSVPLQRTGSQHGPQNAAA. Positions 466 to 475 are enriched in polar residues; it reads LQRTGSQHGP. Ser511 bears the Phosphoserine mark. At Tyr513 the chain carries Phosphotyrosine. The tract at residues 514-533 is disordered; the sequence is SKSGPALPPEGTLARSPSID. 8 ARM repeats span residues 537 to 576, 579 to 618, 623 to 663, 679 to 721, 725 to 770, 832 to 872, 904 to 943, and 997 to 1040; these read KDPREFGWRDPELPEVIQMLQHQFPSVQSNAAAYLQHLCF, NKIKAEIRRQGGIQLLVDLLDHRMTEVHRSACGALRNLVY, DDNK…NLSS, LTNA…NVSS, EARR…NLSY, PKGI…NLAA, VYIRAAVRKEKGLPILVELLRIDNDRVVCAVATALRNMAL, and MENA…SMWQ. Disordered stretches follow at residues 1064 to 1131 and 1152 to 1176; these read TIER…HTSR and APAEDIKQNQVSTQPVPQEPSRKDY. Residues 1072 to 1081 show a composition bias toward polar residues; sequence PYSSSRTPSI. Phosphoserine occurs at positions 1087 and 1098. Residues 1087–1100 show a composition bias toward low complexity; sequence SPNNRSASAPASPR. Residues 1103 to 1112 are compositionally biased toward basic and acidic residues; sequence ISLKERKTDY.

It belongs to the beta-catenin family. Binds to E-cadherin at a juxtamembrane site within the cytoplasmic domain. Binds to PSEN1. Interacts with PDZD2. Interacts (via the extreme C-terminus) with FRMPD2 (via the PDZ 2 domain). Interacts with ZBTB33. Interacts with ARHGEF28. Interacts with CDK5. Interacts with CTNNB1. Interacts with GSK3A and GSK3B. Interacts with DNM2. Interacts with CCDC85B. In terms of processing, O-glycosylated. Post-translationally, phosphorylated by CDK5. Phosphorylated by GSK3B. As to expression, expressed in neurons and glial cells. Isoform 2 was found to be the most predominant isoform in various brain regions. Expressed at neuromuscular junctions.

Its subcellular location is the nucleus. It is found in the cell junction. The protein resides in the adherens junction. It localises to the cell projection. The protein localises to the dendrite. Its subcellular location is the perikaryon. Has a critical role in neuronal development, particularly in the formation and/or maintenance of dendritic spines and synapses. Involved in the regulation of canonical Wnt signaling. It probably acts on beta-catenin turnover, facilitating beta-catenin interaction with GSK3B, phosphorylation, ubiquitination and degradation. May be involved in neuronal cell adhesion and tissue morphogenesis and integrity by regulating adhesion molecules. Functions as a transcriptional activator when bound to ZBTB33. This is Catenin delta-2 (Ctnnd2) from Mus musculus (Mouse).